Here is a 482-residue protein sequence, read N- to C-terminus: Ribosomal protein S6 kinase beta-2 (482 aa).

The tract at residues 1-26 (MAAVFDLDLETEEGSEGEGEPELSPA) is disordered. Residues 7–21 (LDLETEEGSEGEGEP) show a composition bias toward acidic residues. The residue at position 15 (serine 15) is a Phosphoserine. Positions 67-328 (FELLRVLGKG…AADVQRHPFF (262 aa)) constitute a Protein kinase domain. ATP is bound by residues 73 to 81 (LGKGGYGKV) and lysine 99. Aspartate 194 functions as the Proton acceptor in the catalytic mechanism. In terms of domain architecture, AGC-kinase C-terminal spans 329 to 399 (RHMNWDDLLA…VAPSVLDSIK (71 aa)). Positions 407-482 (KLRSPRRLNS…SKRGRGRPGR (76 aa)) are disordered. Phosphoserine occurs at positions 417 and 423. Over residues 437 to 466 (PSLPEPTELPLPPLLPPPPPSTTAPLPIRP) the composition is skewed to pro residues. The short motif at 471 to 477 (KKSKRGR) is the Nuclear localization signal element. Positions 471 to 482 (KKSKRGRGRPGR) are enriched in basic residues. Position 473 is a phosphoserine; by PKC (serine 473).

It belongs to the protein kinase superfamily. AGC Ser/Thr protein kinase family. S6 kinase subfamily. Post-translationally, phosphorylated and activated by MTOR. Phosphorylation by PKC within the NLS in response to mitogenic stimuli causes cytoplasmic retention.

It is found in the cytoplasm. It localises to the nucleus. It catalyses the reaction L-seryl-[protein] + ATP = O-phospho-L-seryl-[protein] + ADP + H(+). The catalysed reaction is L-threonyl-[protein] + ATP = O-phospho-L-threonyl-[protein] + ADP + H(+). Phosphorylates specifically ribosomal protein S6. Seems to act downstream of mTOR signaling in response to growth factors and nutrients to promote cell proliferation, cell growth and cell cycle progression in an alternative pathway regulated by MEAK7. This chain is Ribosomal protein S6 kinase beta-2 (RPS6KB2), found in Homo sapiens (Human).